Reading from the N-terminus, the 403-residue chain is MTKIPMQPADSTPATFHPNAPTKTNILGMNQEQLGAYFKHIGEKPFRATQVMKWIYQHGVTDFAQMTNLSKGLREKLSEQACIELPEVMHKEFSEDGTRKWVFKVAGGSLVETVLIPADDSKVNGRKTLCISSQVGCALDCSFCSTGKQGFERDLTAAEIIGQLWVANASYMEGVDSTEWQNNVTNVVMMGMGEPLLNYTPVVSSMGLMLSDHAYGLSKRRVTLSTSGVVPKMYELYKDIDVALAISLHAPNDELRNELVPINKKYPLSELIAAAKAYVHDNNPRHKKHVTIEYVMLAGVNDSDEHAQQLVALLDGLPSKINLIPFNPFPHAPYDRSSNNRIHAFSNILNNAGFVCTIRQTRGDDIDAACGQLVGQVADRTRRSAKWQQSIKQRAANEQQSEG.

A disordered region spans residues 1–25 (MTKIPMQPADSTPATFHPNAPTKTN). Glu-112 (proton acceptor) is an active-site residue. In terms of domain architecture, Radical SAM core spans 123 to 364 (VNGRKTLCIS…VCTIRQTRGD (242 aa)). A disulfide bridge links Cys-130 with Cys-370. Positions 137, 141, and 144 each coordinate [4Fe-4S] cluster. Residues 193–194 (GE), Ser-225, 247–249 (SLH), and Asn-327 each bind S-adenosyl-L-methionine. Cys-370 (S-methylcysteine intermediate) is an active-site residue.

Belongs to the radical SAM superfamily. RlmN family. [4Fe-4S] cluster serves as cofactor.

The protein resides in the cytoplasm. The enzyme catalyses adenosine(2503) in 23S rRNA + 2 reduced [2Fe-2S]-[ferredoxin] + 2 S-adenosyl-L-methionine = 2-methyladenosine(2503) in 23S rRNA + 5'-deoxyadenosine + L-methionine + 2 oxidized [2Fe-2S]-[ferredoxin] + S-adenosyl-L-homocysteine. The catalysed reaction is adenosine(37) in tRNA + 2 reduced [2Fe-2S]-[ferredoxin] + 2 S-adenosyl-L-methionine = 2-methyladenosine(37) in tRNA + 5'-deoxyadenosine + L-methionine + 2 oxidized [2Fe-2S]-[ferredoxin] + S-adenosyl-L-homocysteine. In terms of biological role, specifically methylates position 2 of adenine 2503 in 23S rRNA and position 2 of adenine 37 in tRNAs. m2A2503 modification seems to play a crucial role in the proofreading step occurring at the peptidyl transferase center and thus would serve to optimize ribosomal fidelity. The sequence is that of Dual-specificity RNA methyltransferase RlmN from Psychrobacter sp. (strain PRwf-1).